We begin with the raw amino-acid sequence, 514 residues long: Ribonuclease Y (514 aa).

Residues 3–23 (VLWMVLGLAIGIAVGAAAGYI) traverse the membrane as a helical segment. One can recognise a KH domain in the interval 203-266 (TVKAVELPSD…EVARIAMERL (64 aa)). One can recognise an HD domain in the interval 330–423 (VLAHSVEVAN…VATADAVSAA (94 aa)).

It belongs to the RNase Y family.

It localises to the cell membrane. Functionally, endoribonuclease that initiates mRNA decay. The chain is Ribonuclease Y from Rubrobacter xylanophilus (strain DSM 9941 / JCM 11954 / NBRC 16129 / PRD-1).